We begin with the raw amino-acid sequence, 357 residues long: GDP-polyphosphate phosphotransferase (357 aa).

Positions 1–83 are disordered; the sequence is MSEEPTVSPP…DSTSASLPAN (83 aa). Residues 14-25 show a composition bias toward low complexity; that stretch reads QPAAQPAKPARP. The segment covering 26-40 has biased composition (basic residues); that stretch reads AARRAPRKPATRRPR.

This sequence belongs to the polyphosphate kinase 2 (PPK2) family. Class I subfamily. As to quaternary structure, homotetramer. Also forms octamers. Mg(2+) serves as cofactor. Requires Mn(2+) as cofactor.

It catalyses the reaction [phosphate](n) + GTP = [phosphate](n+1) + GDP. The enzyme catalyses [phosphate](n) + ATP = [phosphate](n+1) + ADP. Functionally, uses inorganic polyphosphate (polyP) as a donor to convert GDP to GTP and ADP to ATP. Shows a preference for GDP. Can also catalyze the synthesis of polyP from GTP or ATP, but the rate of polyP utilization is 75-fold greater than the rate of polyP synthesis. This chain is GDP-polyphosphate phosphotransferase, found in Pseudomonas aeruginosa (strain ATCC 15692 / DSM 22644 / CIP 104116 / JCM 14847 / LMG 12228 / 1C / PRS 101 / PAO1).